The sequence spans 783 residues: Outer membrane usher protein FanD (783 aa).

The signal sequence occupies residues 1–23 (MNRKKHQILKILLLCLISSKSSA). Cysteines 763 and 782 form a disulfide.

This sequence belongs to the fimbrial export usher family.

It is found in the cell outer membrane. Functionally, involved in the export and assembly of K99 fimbrial subunits across the outer membrane. The chain is Outer membrane usher protein FanD (fanD) from Escherichia coli.